The chain runs to 88 residues: Large ribosomal subunit protein eL34 (88 aa).

A disordered region spans residues 41–72 (RPLNGIPRGRPNELRKLPKTKKRPERPMPNLC).

Belongs to the eukaryotic ribosomal protein eL34 family.

This is Large ribosomal subunit protein eL34 from Thermococcus sibiricus (strain DSM 12597 / MM 739).